A 338-amino-acid chain; its full sequence is Protein pelota homolog (338 aa).

Belongs to the eukaryotic release factor 1 family. Pelota subfamily. Monomer. A divalent metal cation is required as a cofactor.

It is found in the cytoplasm. Its function is as follows. May function in recognizing stalled ribosomes, interact with stem-loop structures in stalled mRNA molecules, and effect endonucleolytic cleavage of the mRNA. May play a role in the release non-functional ribosomes and degradation of damaged mRNAs. Has endoribonuclease activity. In Caldivirga maquilingensis (strain ATCC 700844 / DSM 13496 / JCM 10307 / IC-167), this protein is Protein pelota homolog.